The following is a 286-amino-acid chain: Meteorin-like protein (286 aa).

A signal peptide spans Met1–Ser21. 5 cysteine pairs are disulfide-bonded: Cys28–Cys51, Cys84–Cys120, Cys165–Cys235, Cys168–Cys259, and Cys178–Cys281.

It belongs to the meteorin family.

It localises to the secreted. In terms of biological role, hormone induced following exercise or cold exposure that promotes energy expenditure. Induced either in the skeletal muscle after exercise or in adipose tissue following cold exposure and is present in the circulation. Able to stimulate energy expenditure associated with the browning of the white fat depots and improves glucose tolerance. This is Meteorin-like protein (metrnl) from Danio rerio (Zebrafish).